A 268-amino-acid polypeptide reads, in one-letter code: Formamidopyrimidine-DNA glycosylase (268 aa).

Pro-2 functions as the Schiff-base intermediate with DNA in the catalytic mechanism. Glu-3 functions as the Proton donor in the catalytic mechanism. Lys-56 serves as the catalytic Proton donor; for beta-elimination activity. DNA-binding residues include His-91, Arg-110, and Arg-149. The FPG-type zinc-finger motif lies at 234 to 268 (QVYGRFNQACPNCGQPLKRSRIGGRSSHYCEKCQQ). Arg-258 functions as the Proton donor; for delta-elimination activity in the catalytic mechanism.

This sequence belongs to the FPG family. Monomer. Zn(2+) serves as cofactor.

It catalyses the reaction Hydrolysis of DNA containing ring-opened 7-methylguanine residues, releasing 2,6-diamino-4-hydroxy-5-(N-methyl)formamidopyrimidine.. It carries out the reaction 2'-deoxyribonucleotide-(2'-deoxyribose 5'-phosphate)-2'-deoxyribonucleotide-DNA = a 3'-end 2'-deoxyribonucleotide-(2,3-dehydro-2,3-deoxyribose 5'-phosphate)-DNA + a 5'-end 5'-phospho-2'-deoxyribonucleoside-DNA + H(+). Involved in base excision repair of DNA damaged by oxidation or by mutagenic agents. Acts as a DNA glycosylase that recognizes and removes damaged bases. Has a preference for oxidized purines, such as 7,8-dihydro-8-oxoguanine (8-oxoG). Has AP (apurinic/apyrimidinic) lyase activity and introduces nicks in the DNA strand. Cleaves the DNA backbone by beta-delta elimination to generate a single-strand break at the site of the removed base with both 3'- and 5'-phosphates. This is Formamidopyrimidine-DNA glycosylase from Syntrophomonas wolfei subsp. wolfei (strain DSM 2245B / Goettingen).